The sequence spans 58 residues: Ribosome modulation factor (58 aa).

Residues Met-1–Ser-14 show a composition bias toward basic residues. Residues Met-1–Ser-25 form a disordered region.

The protein belongs to the ribosome modulation factor family.

The protein localises to the cytoplasm. Functionally, during stationary phase, converts 70S ribosomes to an inactive dimeric form (100S ribosomes). The protein is Ribosome modulation factor of Alteromonas naphthalenivorans.